We begin with the raw amino-acid sequence, 607 residues long: Rap1 GTPase-GDP dissociation stimulator 1 (607 aa).

Residues 4 to 13 carry the Nuclear export signal (NES) motif; the sequence is LSDTLKKLKI. ARM repeat units lie at residues 89-131 and 170-211; these read GLIS…DQAG and DSLQ…NLAE. Positions 122–170 are prevents binding to prenylated RHOA; that stretch reads EGRSAVDQAGGAQIVIDHLRSLCSITDPANEKLLTVFCGMLMNYSNEND. Lysine 230 is modified (N6-acetyllysine). The tract at residues 239–255 is interacts with polybasic regions in GTPases; the sequence is DKREMIFEVLAPLAEND. ARM repeat units lie at residues 347–390, 391–431, and 479–519; these read DANC…NLAI, PVIN…MLID, and SKDV…LIAA. The segment at 379 to 428 is critical for catalytic activity; that stretch reads HAALSALRNLAIPVINKAKMLSAGVTEAVLKFLKSEMPPVQFKLLGTLRM.

As to quaternary structure, interacts with RABL3. Interacts with RHOT1. In terms of assembly, interacts with unprenylated RHOA; the interaction is direct. Interacts with RAP1A. Interacts with KRAS. Interacts with RAC1. Interacts with RAP1B. Preferentially interacts with unprenylated GTPases that will become geranylgeranylated. May also interact with prenylated GTPases. Interacts with prenylated RHOA; the interaction is direct and in a 1:1 stoichiometry. Interacts with RAP1A. Interacts with KRAS. Interacts with RAC1. Interacts with RAP1B. Preferentially interacts with prenylated GTPases. Forms covalent cross-links mediated by transglutaminase TGM2, between a glutamine and the epsilon-amino group of a lysine residue, forming homopolymers and heteropolymers.

Its subcellular location is the cytoplasm. The protein resides in the cytosol. The protein localises to the endoplasmic reticulum. It localises to the mitochondrion. It is found in the nucleus. In terms of biological role, acts as a GEF (guanine nucleotide exchange factor) for the Rho family of small GTP-binding proteins (G proteins) that stimulates the dissociation of GDP to enable subsequent binding of GTP. Additionally, appears to chaperone the processing and/or trafficking of small GTPases containing a C-terminal polybasic region independently of GEF activity. Targets include RAP1A/RAP1B, RHOA, RHOB, RHOC, RAC1 and KRAS. Regulates mitochondrial dynamics by controlling RHOT function to promote mitochondrial fission during high calcium conditions. Able to promote the Ca(2+) release from the endoplasmic reticulum via both inositol trisphosphate (Ins3P) and ryanodine sensitive receptors leading to a enhanced mitochondrial Ca(2+) uptake. Functionally, acts as a GEF (guanine nucleotide exchange factor) for unprenylated RHOA. Chaperones the entry and passage of small GTPases through the prenylation pathway. Recognizes the last amino acid in the GTPase C-terminal CAAX motif with a preference for 'Leu' over 'Met', indicating involvement in the geranylgeranylation pathway. Acts as a GEF (guanine nucleotide exchange factor) for prenylated RHOA. Acts as a GEF for RHOC. Chaperones the downstream trafficking and/or processing of small newly prenylated GTPases. Escorts RAC1 to the nucleus. In Homo sapiens (Human), this protein is Rap1 GTPase-GDP dissociation stimulator 1.